Reading from the N-terminus, the 371-residue chain is Envelope glycoprotein M (371 aa).

The Intravirion portion of the chain corresponds to 1–13 (MAPSHVDKVNTRT). The chain crosses the membrane as a helical span at residues 14–34 (WSASIVFMVLTFVNVSVHLVL). Topologically, residues 35–79 (SNFPHLGYPCVYYHVVDFERLNMSAYNVMHLHTPMLFLDSVQLVC) are virion surface. A helical membrane pass occupies residues 80-100 (YAVFMQLVFLAVTIYYLVCWI). At 101 to 126 (KISMRKDKGMSLNQSTRDISYMGDSL) the chain is on the intravirion side. A helical membrane pass occupies residues 127-147 (TAFLFILSMDTFQLFTLTMSF). The Virion surface portion of the chain corresponds to 148 to 151 (RLPS). A helical transmembrane segment spans residues 152–172 (MIAFMAAVHFFCLTIFNVSMV). The Intravirion segment spans residues 173 to 200 (TQYRSYKRSLFFFSRLHPKLKGTVQFRT). The helical transmembrane segment at 201-221 (LIVNLVEVALGFNTTVVAMAL) threads the bilayer. At 222–239 (CYGFGNNFFVRTGHMVLA) the chain is on the virion surface side. The helical transmembrane segment at 240–260 (VFVVYAIISIIYFLLIEAVFF) threads the bilayer. The Intravirion segment spans residues 261 to 264 (QYVK). The chain crosses the membrane as a helical span at residues 265 to 285 (VQFGYHLGAFFGLCGLIYPIV). Topologically, residues 286–298 (QYDTFLSNEYRTG) are virion surface. The chain crosses the membrane as a helical span at residues 299–319 (ISWSFGMLFFIWAMFTTCRAV). The Intravirion segment spans residues 320–371 (RYFRGRGSGSVKYQALATASGEEVAALSHHDSLESRRLREEEDDDDEDFEDA). Residues 346–371 (LSHHDSLESRRLREEEDDDDEDFEDA) form a disordered region. Residues 347-359 (SHHDSLESRRLRE) are compositionally biased toward basic and acidic residues. Over residues 360-371 (EEDDDDEDFEDA) the composition is skewed to acidic residues.

Belongs to the herpesviridae glycoprotein M family. Interacts (via N-terminus) with gN (via N-terminus). The gM-gN heterodimer forms the gCII complex.

The protein resides in the virion membrane. It localises to the host Golgi apparatus. Its subcellular location is the host trans-Golgi network. It is found in the host endosome membrane. The protein localises to the host nucleus inner membrane. In terms of biological role, envelope glycoprotein important for virion assembly and egress. Plays a role in the correct incorporation of gH-gL into virion membrane. Directs the glycoprotein N (gN) to the host trans-Golgi network. The sequence is that of Envelope glycoprotein M from Homo sapiens (Human).